Here is a 253-residue protein sequence, read N- to C-terminus: Triosephosphate isomerase (253 aa).

Residue 13–15 coordinates substrate; the sequence is NWK. The active-site Electrophile is histidine 100. Catalysis depends on glutamate 169, which acts as the Proton acceptor. Residues glycine 175, serine 208, and 229–230 contribute to the substrate site; that span reads GG.

It belongs to the triosephosphate isomerase family. Homodimer.

The protein localises to the cytoplasm. It catalyses the reaction D-glyceraldehyde 3-phosphate = dihydroxyacetone phosphate. The protein operates within carbohydrate biosynthesis; gluconeogenesis. Its pathway is carbohydrate degradation; glycolysis; D-glyceraldehyde 3-phosphate from glycerone phosphate: step 1/1. Functionally, involved in the gluconeogenesis. Catalyzes stereospecifically the conversion of dihydroxyacetone phosphate (DHAP) to D-glyceraldehyde-3-phosphate (G3P). The chain is Triosephosphate isomerase from Synechococcus sp. (strain RCC307).